A 37-amino-acid polypeptide reads, in one-letter code: Large ribosomal subunit protein bL36 (37 aa).

The protein belongs to the bacterial ribosomal protein bL36 family.

This is Large ribosomal subunit protein bL36 from Alkalilimnicola ehrlichii (strain ATCC BAA-1101 / DSM 17681 / MLHE-1).